Consider the following 562-residue polypeptide: Septation ring formation regulator EzrA (562 aa).

Residues 1–2 (ME) are Extracellular-facing. A helical membrane pass occupies residues 3–21 (FVIGLLIVLLALFAAGYFF). Residues 22–562 (RKKIYAEIDR…VEKIKADISA (541 aa)) lie on the Cytoplasmic side of the membrane. Coiled coils occupy residues 377 to 425 (YSLL…LKKT) and 470 to 497 (MEEA…LVEQ).

The protein belongs to the EzrA family. Post-translationally, may be degraded by FtsH protease.

Its subcellular location is the cell membrane. It is found in the membrane raft. Functionally, negative regulator of FtsZ ring formation; modulates the frequency and position of FtsZ ring formation. Inhibits FtsZ ring formation at polar sites. Interacts either with FtsZ or with one of its binding partners to promote depolymerization. In Bacillus subtilis (strain 168), this protein is Septation ring formation regulator EzrA.